The chain runs to 344 residues: MSPSVLEPQSVPTLVNVGLKAVGRNDAPVERDARGLSKPLLELMPTLGTDAFTFSPIRESTVSRAMTRRYFADLDAHAETDIVIVGAGSCGLSAAYVLSTLRPDLRITIVEAGVAPGGGAWLGGQLFSAMVMRKPADVFLDEVGVPYEDEGDYVVVKHAALFTSTVLSKVLQRPNVKLFNATTVEDLITRKHHAESSSSSDDGEAEDEAKVRIAGVVTNWTLVSMHHDDQSCMDPNTINAPVIISTTGHDGPFGAFSVKRLVSMKQMERLNGMRGLDMQSAEDAIVNNTREIVPGLIVGGMELSEIDGANRMGPTFGAMALSGVKAAHEAIRVFDLRKAQNDKC.

Substrate-binding positions include cysteine 90, 111 to 112 (EA), glycine 119, and valine 184. At cysteine 232 the chain carries 2,3-didehydroalanine (Cys). Residues aspartate 234, histidine 249, methionine 301, and 311-313 (RMG) contribute to the substrate site.

This sequence belongs to the THI4 family. As to quaternary structure, homooctamer. Interacts with cyp-41. Requires Fe cation as cofactor. In terms of processing, during the catalytic reaction, a sulfide is transferred from Cys-232 to a reaction intermediate, generating a dehydroalanine residue.

It localises to the cytoplasm. The protein localises to the nucleus. The enzyme catalyses [ADP-thiazole synthase]-L-cysteine + glycine + NAD(+) = [ADP-thiazole synthase]-dehydroalanine + ADP-5-ethyl-4-methylthiazole-2-carboxylate + nicotinamide + 3 H2O + 2 H(+). Functionally, involved in biosynthesis of the thiamine precursor thiazole. Catalyzes the conversion of NAD and glycine to adenosine diphosphate 5-(2-hydroxyethyl)-4-methylthiazole-2-carboxylic acid (ADT), an adenylated thiazole intermediate. The reaction includes an iron-dependent sulfide transfer from a conserved cysteine residue of the protein to a thiazole intermediate. The enzyme can only undergo a single turnover, which suggests it is a suicide enzyme. May have additional roles in adaptation to various stress conditions and in DNA damage tolerance. The polypeptide is Thiamine thiazole synthase (Neurospora crassa (strain ATCC 24698 / 74-OR23-1A / CBS 708.71 / DSM 1257 / FGSC 987)).